The sequence spans 158 residues: SsrA-binding protein (158 aa).

The protein belongs to the SmpB family.

The protein resides in the cytoplasm. Its function is as follows. Required for rescue of stalled ribosomes mediated by trans-translation. Binds to transfer-messenger RNA (tmRNA), required for stable association of tmRNA with ribosomes. tmRNA and SmpB together mimic tRNA shape, replacing the anticodon stem-loop with SmpB. tmRNA is encoded by the ssrA gene; the 2 termini fold to resemble tRNA(Ala) and it encodes a 'tag peptide', a short internal open reading frame. During trans-translation Ala-aminoacylated tmRNA acts like a tRNA, entering the A-site of stalled ribosomes, displacing the stalled mRNA. The ribosome then switches to translate the ORF on the tmRNA; the nascent peptide is terminated with the 'tag peptide' encoded by the tmRNA and targeted for degradation. The ribosome is freed to recommence translation, which seems to be the essential function of trans-translation. The protein is SsrA-binding protein of Bartonella quintana (strain Toulouse) (Rochalimaea quintana).